A 301-amino-acid polypeptide reads, in one-letter code: tRNA dimethylallyltransferase (301 aa).

2-9 is an ATP binding site; that stretch reads GPTASGKT. Substrate is bound at residue 4-9; it reads TASGKT. Interaction with substrate tRNA regions lie at residues 27–30 and 151–155; these read DSAM and QRIQR.

This sequence belongs to the IPP transferase family. As to quaternary structure, monomer. Requires Mg(2+) as cofactor.

It carries out the reaction adenosine(37) in tRNA + dimethylallyl diphosphate = N(6)-dimethylallyladenosine(37) in tRNA + diphosphate. In terms of biological role, catalyzes the transfer of a dimethylallyl group onto the adenine at position 37 in tRNAs that read codons beginning with uridine, leading to the formation of N6-(dimethylallyl)adenosine (i(6)A). This Coxiella burnetii (strain CbuK_Q154) (Coxiella burnetii (strain Q154)) protein is tRNA dimethylallyltransferase.